Here is a 296-residue protein sequence, read N- to C-terminus: GTPase Era (296 aa).

The Era-type G domain maps to 3–170; it reads KSGFVTIVGR…KELMFKYIPE (168 aa). Residues 11–18 form a G1 region; the sequence is GRPNVGKS. Residue 11–18 participates in GTP binding; the sequence is GRPNVGKS. The G2 stretch occupies residues 37-41; it reads QTTRN. Positions 58–61 are G3; sequence DTPG. Residues 58 to 62 and 120 to 123 each bind GTP; these read DTPGI and NKID. The interval 120–123 is G4; the sequence is NKID. The interval 149-151 is G5; that stretch reads ISA. In terms of domain architecture, KH type-2 spans 201-278; that stretch reads LSEEVPHGIA…YIRLWVKVKE (78 aa).

The protein belongs to the TRAFAC class TrmE-Era-EngA-EngB-Septin-like GTPase superfamily. Era GTPase family. Monomer.

Its subcellular location is the cytoplasm. The protein resides in the cell membrane. In terms of biological role, an essential GTPase that binds both GDP and GTP, with rapid nucleotide exchange. Plays a role in 16S rRNA processing and 30S ribosomal subunit biogenesis and possibly also in cell cycle regulation and energy metabolism. This is GTPase Era from Clostridium botulinum (strain Loch Maree / Type A3).